Consider the following 684-residue polypeptide: Acetyl-coenzyme A synthetase 2 (684 aa).

CoA is bound by residues 207–210 (RGGK) and threonine 326. Residues 402–404 (GEP), 426–431 (DTMWQT), aspartate 517, and arginine 532 contribute to the ATP site. Residue serine 540 coordinates CoA. Arginine 543 provides a ligand contact to ATP. A CoA-binding site is contributed by arginine 613.

The protein belongs to the ATP-dependent AMP-binding enzyme family.

The catalysed reaction is acetate + ATP + CoA = acetyl-CoA + AMP + diphosphate. The chain is Acetyl-coenzyme A synthetase 2 (ACS2) from Kluyveromyces lactis (strain ATCC 8585 / CBS 2359 / DSM 70799 / NBRC 1267 / NRRL Y-1140 / WM37) (Yeast).